Here is a 255-residue protein sequence, read N- to C-terminus: Hydroxyacylglutathione hydrolase (255 aa).

Zn(2+) is bound by residues His-56, His-58, Asp-60, His-61, His-114, Asp-133, and His-171.

The protein belongs to the metallo-beta-lactamase superfamily. Glyoxalase II family. Monomer. It depends on Zn(2+) as a cofactor.

It catalyses the reaction an S-(2-hydroxyacyl)glutathione + H2O = a 2-hydroxy carboxylate + glutathione + H(+). The protein operates within secondary metabolite metabolism; methylglyoxal degradation; (R)-lactate from methylglyoxal: step 2/2. Thiolesterase that catalyzes the hydrolysis of S-D-lactoyl-glutathione to form glutathione and D-lactic acid. The chain is Hydroxyacylglutathione hydrolase from Bradyrhizobium sp. (strain ORS 278).